The chain runs to 155 residues: Chromosomal passenger complex protein bir-1 (155 aa).

The BIR repeat unit spans residues Arg20–Arg87. Zn(2+)-binding residues include Cys57, Cys60, His76, and Cys83.

This sequence belongs to the IAP family. As to quaternary structure, component of the CPC complex which consists of icp-1; csc-1; bir-1 and air-2. Within the complex, interacts with csc-1, icp-1 and air-2. Interacts with csc-1 in a zinc-dependent-manner; the interaction is direct. As to expression, expressed in oocytes and sperm.

The protein resides in the chromosome. It localises to the cytoplasm. It is found in the cytoskeleton. The protein localises to the spindle. Its subcellular location is the midbody. Functionally, component of the chromosomal passenger complex (CPC), a complex that acts as a key regulator of chromosome segregation and cytokinesis. The CPC complex has essential functions at the centromere in ensuring correct chromosome condensation, alignment and segregation. In the complex, required to direct the Aurora B/air-2 kinase to chromosomes. Also functions in spindle midzone formation and in the formation of polar bodies during oogenesis. Required for the localization of the kinetochore component hcp-1 to chromosomes. Involved in the positive regulation of transcription. Involved in the transcriptional regulation of collagen genes. The protein is Chromosomal passenger complex protein bir-1 of Caenorhabditis elegans.